A 764-amino-acid polypeptide reads, in one-letter code: Protein FAR1-RELATED SEQUENCE 7 (764 aa).

An FAR1 1 domain is found at 42 to 118 (DYYNSYATRT…QKEHNHDLGG (77 aa)). The segment at 119-144 (HIEEAQTTPRPSVQQRAPAPTKLGIS) is disordered. Over residues 123–133 (AQTTPRPSVQQ) the composition is skewed to polar residues. The region spanning 204–280 (QFYQAYAEVV…NKDHNHDLEP (77 aa)) is the FAR1 2 domain. The region spanning 375-471 (AVVFDTSYRK…SAWQIRSKER (97 aa)) is the MULE domain. An SWIM-type zinc finger spans residues 650-686 (HAVTFSASNLNASCSCQMFEYEGLLCRHILKVFNLLD).

The protein belongs to the FHY3/FAR1 family. Expressed in hypocotyls, rosette and cauline leaves, inflorescences stems, flowers and siliques.

It is found in the nucleus. Functionally, putative transcription activator involved in regulating light control of development. This Arabidopsis thaliana (Mouse-ear cress) protein is Protein FAR1-RELATED SEQUENCE 7 (FRS7).